The primary structure comprises 319 residues: Thiamine-monophosphate kinase (319 aa).

4 residues coordinate Mg(2+): Asp28, Thr43, Thr44, and Asp45. Position 52 (His52) interacts with substrate. Asp73 is a Mg(2+) binding site. Residues Tyr104, 121–122 (GD), and Arg145 each bind ATP. Asp122 is a Mg(2+) binding site. Asp218 is a binding site for Mg(2+). Residue Ser220 coordinates ATP. Asp221 contributes to the Mg(2+) binding site. Residues Glu268 and Tyr315 each contribute to the substrate site.

This sequence belongs to the thiamine-monophosphate kinase family.

It catalyses the reaction thiamine phosphate + ATP = thiamine diphosphate + ADP. It participates in cofactor biosynthesis; thiamine diphosphate biosynthesis; thiamine diphosphate from thiamine phosphate: step 1/1. In terms of biological role, catalyzes the ATP-dependent phosphorylation of thiamine-monophosphate (TMP) to form thiamine-pyrophosphate (TPP), the active form of vitamin B1. The sequence is that of Thiamine-monophosphate kinase from Methanocaldococcus jannaschii (strain ATCC 43067 / DSM 2661 / JAL-1 / JCM 10045 / NBRC 100440) (Methanococcus jannaschii).